Reading from the N-terminus, the 428-residue chain is Putative zinc metalloprotease LL2128 (428 aa).

Histidine 19 serves as a coordination point for Zn(2+). Residue glutamate 20 is part of the active site. Histidine 23 is a binding site for Zn(2+). The next 3 membrane-spanning stretches (helical) occupy residues 188 to 210 (GPLN…QGGV), 354 to 376 (IVYL…IPVL), and 401 to 423 (IITM…NDIL). Residues 188 to 282 (GPLNNFILGI…SETLSVTPKK (95 aa)) form the PDZ domain.

Belongs to the peptidase M50B family. Zn(2+) serves as cofactor.

The protein resides in the cell membrane. The chain is Putative zinc metalloprotease LL2128 from Lactococcus lactis subsp. lactis (strain IL1403) (Streptococcus lactis).